Here is a 397-residue protein sequence, read N- to C-terminus: Elongation factor Tu-1 (397 aa).

The 197-residue stretch at 10–206 (KPHVNIGTIG…AVDESIPEPE (197 aa)) folds into the tr-type G domain. A G1 region spans residues 19-26 (GHIDHGKT). Position 19-26 (19-26 (GHIDHGKT)) interacts with GTP. Thr26 serves as a coordination point for Mg(2+). Positions 62 to 66 (GITIS) are G2. The segment at 83–86 (DCPG) is G3. Residues 83-87 (DCPGH) and 138-141 (NKAD) contribute to the GTP site. Positions 138–141 (NKAD) are G4. Residues 176-178 (SAL) form a G5 region.

The protein belongs to the TRAFAC class translation factor GTPase superfamily. Classic translation factor GTPase family. EF-Tu/EF-1A subfamily. Monomer.

It localises to the cytoplasm. The catalysed reaction is GTP + H2O = GDP + phosphate + H(+). In terms of biological role, GTP hydrolase that promotes the GTP-dependent binding of aminoacyl-tRNA to the A-site of ribosomes during protein biosynthesis. The protein is Elongation factor Tu-1 of Streptomyces ramocissimus.